The following is a 190-amino-acid chain: Bifunctional D-Ala-D-Ala dipeptidase and D-Ala-D-Ala carboxypeptidase VanXYC (190 aa).

Glutamate 66 serves as a coordination point for Mg(2+). The a dipeptide site is built by glutamine 67, alanine 88, serine 93, histidine 95, and aspartate 102. Cu(2+) is bound by residues histidine 95 and aspartate 102. Residues histidine 95 and aspartate 102 each contribute to the Zn(2+) site. The catalytic acid/base residue role is filled by glutamate 153. A dipeptide is bound by residues tryptophan 155 and histidine 156. Cu(2+) is bound at residue histidine 156. Zn(2+) is bound at residue histidine 156.

The protein belongs to the peptidase M15D family. In terms of assembly, homodimer.

It is found in the cytoplasm. It catalyses the reaction D-alanyl-D-alanine + H2O = 2 D-alanine. It carries out the reaction UDP-N-acetyl-alpha-D-muramoyl-L-alanyl-gamma-D-glutamyl-L-lysyl-D-alanyl-D-alanine + H2O = UDP-N-acetyl-alpha-D-muramoyl-L-alanyl-gamma-D-glutamyl-L-lysyl-D-alanine + D-alanine. In terms of biological role, bifunctional enzyme, exhibiting dipeptidase and carboxypeptidase activities. Catalyzes hydrolysis of the D-alanyl-D-alanine dipeptide. Cleaves the C-terminal D-alanine residue of UDP-muramyl-pentapeptide[Ala] (UDP-MurNAc-L-Ala-D-Glu-L-Lys-D-Ala-D-Ala). Shows no activity against the pentapeptide with a C-terminal D-serine residue. Together with VanC/VanC1 and VanT, required for vancomycin resistance in E.gallinarum strain BM4174. The protein is Bifunctional D-Ala-D-Ala dipeptidase and D-Ala-D-Ala carboxypeptidase VanXYC of Enterococcus gallinarum.